The primary structure comprises 427 residues: Trigger factor (427 aa).

A PPIase FKBP-type domain is found at 160-240 (TDTVIGDVVK…VKEVKRLELP (81 aa)).

The protein belongs to the FKBP-type PPIase family. Tig subfamily.

It is found in the cytoplasm. The catalysed reaction is [protein]-peptidylproline (omega=180) = [protein]-peptidylproline (omega=0). In terms of biological role, involved in protein export. Acts as a chaperone by maintaining the newly synthesized protein in an open conformation. Functions as a peptidyl-prolyl cis-trans isomerase. The polypeptide is Trigger factor (Chlorobium limicola (strain DSM 245 / NBRC 103803 / 6330)).